The chain runs to 1919 residues: Protein TIC 214 (1919 aa).

Helical transmembrane passes span 18-38, 67-87, 90-110, 127-147, 175-195, and 224-244; these read IINS…FSIG, FITG…HLAL, PHTI…WNNH, LSIQ…HFIL, VGWL…LVWI, and IFSI…PSPI. 3 disordered regions span residues 250 to 375, 1107 to 1129, and 1606 to 1636; these read KETP…GKEK, IKSI…NKRS, and ELKN…RRFV. 5 stretches are compositionally biased toward acidic residues: residues 259–269, 278–288, 297–307, 316–328, and 355–366; these read GESEEETDVEI, GESE…EIET, and EKEDPDKIDETE. Basic residues predominate over residues 1107–1117; the sequence is IKSITKEKKKG. A compositionally biased stretch (basic and acidic residues) spans 1606–1623; it reads ELKNRNQEEKEPADRGDL. Residues 1626–1636 show a composition bias toward polar residues; it reads DAQNQGNRRFV.

It belongs to the TIC214 family. Part of the Tic complex.

It localises to the plastid. It is found in the chloroplast inner membrane. Its function is as follows. Involved in protein precursor import into chloroplasts. May be part of an intermediate translocation complex acting as a protein-conducting channel at the inner envelope. This is Protein TIC 214 from Panax ginseng (Korean ginseng).